A 163-amino-acid polypeptide reads, in one-letter code: Nucleotide-binding protein Noca_0564 (163 aa).

It belongs to the YajQ family.

In terms of biological role, nucleotide-binding protein. This chain is Nucleotide-binding protein Noca_0564, found in Nocardioides sp. (strain ATCC BAA-499 / JS614).